A 1405-amino-acid polypeptide reads, in one-letter code: Sterol 3-beta-glucosyltransferase (1405 aa).

2 stretches are compositionally biased toward basic and acidic residues: residues 1–16 (MRPFLDDAKRRVDRKL) and 95–105 (TGQRPRKESSV). Disordered stretches follow at residues 1-27 (MRPFLDDAKRRVDRKLSARRQSLSASR), 83-186 (ARFD…SATP), and 203-230 (DLKASSTERSQSSLNETGAKGPRDASVS). The span at 106–115 (RKGTSVSVNT) shows a compositional bias: polar residues. Low complexity predominate over residues 116–126 (SSLDPSQRSSS). Residues 206–218 (ASSTERSQSSLNE) are compositionally biased toward polar residues. Residues 246–285 (EKVLVEYACSLLQSMLLQGYMYVTEGHICFYAYLPKKSTV) enclose the GRAM 1 domain. In terms of domain architecture, PH spans 285-384 (VAIKSGYLHK…WVKALQKVIF (100 aa)). Disordered stretches follow at residues 461–526 (SQHL…DSSD) and 566–642 (TIYG…SGAP). Residues 483 to 493 (RWSLTSGTSRA) are compositionally biased toward polar residues. Residues 570–589 (LDRRPSGRERRGRRNSDETA) show a composition bias toward basic and acidic residues. Over residues 590 to 603 (RSPSTRVNVGTGQQ) the composition is skewed to polar residues. Over residues 606-624 (ELDRRTDGNTSGREARDTT) the composition is skewed to basic and acidic residues. A compositionally biased stretch (polar residues) spans 626 to 642 (ESDQYTQDPTKSFSGAP). The region spanning 724–790 (DRFRAHFALP…RDIENVEKEK (67 aa)) is the GRAM 2 domain. Residues serine 911, arginine 912, aspartate 914, alanine 1214, histidine 1216, histidine 1229, glycine 1233, threonine 1234, aspartate 1253, and glutamine 1254 each coordinate UDP-alpha-D-glucose. The interval 1330–1367 (SIASSTPFSPTPSAKTAAEQDADDDVEDSEEWTFVGDD) is disordered. Low complexity predominate over residues 1332 to 1348 (ASSTPFSPTPSAKTAAE). Acidic residues predominate over residues 1349–1367 (QDADDDVEDSEEWTFVGDD).

This sequence belongs to the glycosyltransferase 28 family.

It is found in the cytoplasm. The protein resides in the preautophagosomal structure membrane. It carries out the reaction a sterol + UDP-alpha-D-glucose = a sterol 3-beta-D-glucoside + UDP + H(+). The enzyme catalyses ergosterol + UDP-alpha-D-glucose = ergosteryl 3-beta-D-glucoside + UDP + H(+). Sterol glycosyltransferase responsible for the glycosylation of ergosterol to form ergosterol-glucoside. The polypeptide is Sterol 3-beta-glucosyltransferase (Aspergillus fumigatus (strain ATCC MYA-4609 / CBS 101355 / FGSC A1100 / Af293) (Neosartorya fumigata)).